Consider the following 432-residue polypeptide: Transcriptional adapter 3-B (432 aa).

Disordered stretches follow at residues histidine 90 to arginine 124 and serine 275 to glutamate 315. The segment covering aspartate 293–proline 305 has biased composition (polar residues). A coiled-coil region spans residues alanine 335–isoleucine 398.

It belongs to the NGG1 family.

The protein localises to the nucleus. Functions as a component of the PCAF complex. The PCAF complex is capable of efficiently acetylating histones in a nucleosomal context. This chain is Transcriptional adapter 3-B (tada3-b), found in Xenopus laevis (African clawed frog).